A 997-amino-acid chain; its full sequence is mRNA 3'-end-processing protein RNA14 (997 aa).

A disordered region spans residues 1-152 (MASEGTSWGA…THAPVPPAVP (152 aa)). Over residues 32 to 44 (HDSLASGDADAAD) the composition is skewed to low complexity. The segment covering 46–56 (GTEDDGGEYDP) has biased composition (acidic residues). Positions 72–82 (SSGTQRQTSKP) are enriched in polar residues. The span at 92–111 (ASDDEDEDEDEDEDEDEDEQ) shows a compositional bias: acidic residues. The segment covering 116–133 (VPQTDAVSTQNHPGPSTT) has biased composition (polar residues). HAT repeat units follow at residues 194-226 (SPLE…LELK), 228-259 (NNFV…YIRR), 270-305 (QARR…FVKN), 319-352 (QKMD…FEMG), 389-422 (TNLP…WEKE), and 434-466 (AYNQ…WCFQ). The interval 549–579 (LKQAAAQDPVQTSIEENDDDEDNTPKRSPTE) is disordered. Residues 654–686 (YKDPVGAKIFERGARLFPNDEMFMIEYLKYLHS) form an HAT 7 repeat. Disordered stretches follow at residues 792 to 854 (QQSI…RRLD) and 907 to 997 (KAAG…GYRY).

It is found in the nucleus. It localises to the cytoplasm. Component of the cleavage factor IA (CFIA) complex, which is involved in the endonucleolytic cleavage during polyadenylation-dependent pre-mRNA 3'-end formation. This Gibberella zeae (strain ATCC MYA-4620 / CBS 123657 / FGSC 9075 / NRRL 31084 / PH-1) (Wheat head blight fungus) protein is mRNA 3'-end-processing protein RNA14 (RNA14).